A 322-amino-acid polypeptide reads, in one-letter code: Stage V sporulation protein K (322 aa).

99–106 (GNPGTGKT) contributes to the ATP binding site.

This sequence belongs to the CbxX/CfxQ family.

This Bacillus subtilis (strain 168) protein is Stage V sporulation protein K (spoVK).